The primary structure comprises 904 residues: Protein translocase subunit SecA (904 aa).

Residues Gln89, 107–111 (GEGKT), and Asp502 each bind ATP. Residues Cys888, Cys890, Cys899, and His900 each contribute to the Zn(2+) site.

Belongs to the SecA family. As to quaternary structure, monomer and homodimer. Part of the essential Sec protein translocation apparatus which comprises SecA, SecYEG and auxiliary proteins SecDF-YajC and YidC. Zn(2+) serves as cofactor.

It is found in the cell inner membrane. It localises to the cytoplasm. It catalyses the reaction ATP + H2O + cellular proteinSide 1 = ADP + phosphate + cellular proteinSide 2.. Part of the Sec protein translocase complex. Interacts with the SecYEG preprotein conducting channel. Has a central role in coupling the hydrolysis of ATP to the transfer of proteins into and across the cell membrane, serving both as a receptor for the preprotein-SecB complex and as an ATP-driven molecular motor driving the stepwise translocation of polypeptide chains across the membrane. The sequence is that of Protein translocase subunit SecA from Roseobacter denitrificans (strain ATCC 33942 / OCh 114) (Erythrobacter sp. (strain OCh 114)).